We begin with the raw amino-acid sequence, 156 residues long: Fibroblast growth factor 2 (156 aa).

The propeptide occupies 1–9 (MAAGSITTL). Asn-37 lines the heparin pocket. At Tyr-83 the chain carries Phosphotyrosine; by TEC. Residue Lys-96 forms a Glycyl lysine isopeptide (Lys-Gly) (interchain with G-Cter in SUMO1) linkage. Positions 129 to 145 (KRTGQYKLGSKTGPGQK) are heparin-binding.

The protein belongs to the heparin-binding growth factors family. As to quaternary structure, monomer. Homodimer. Interacts with FGFR1, FGFR2, FGFR3 and FGFR4. Affinity between fibroblast growth factors (FGFs) and their receptors is increased by heparan sulfate glycosaminoglycans that function as coreceptors. Interacts with CSPG4, FGFBP1 and TEC. Found in a complex with FGFBP1, FGF1 and FGF2. Interacts with FGFBP3. Interacts with integrin ITGAV:ITGB3; the interaction is required for FGF2 signaling. Interacts with SNORC (via the extracellular domain). Interacts with glypican GPC3. Phosphorylation at Tyr-83 regulates FGF2 unconventional secretion.

It localises to the secreted. It is found in the nucleus. Functionally, acts as a ligand for FGFR1, FGFR2, FGFR3 and FGFR4. Also acts as an integrin ligand which is required for FGF2 signaling. Binds to integrin ITGAV:ITGB3. Plays an important role in the regulation of cell survival, cell division, cell differentiation and cell migration. Functions as a potent mitogen in vitro. Can induce angiogenesis. Mediates phosphorylation of ERK1/2 and thereby promotes retinal lens fiber differentiation. This Monodelphis domestica (Gray short-tailed opossum) protein is Fibroblast growth factor 2 (FGF2).